A 348-amino-acid polypeptide reads, in one-letter code: Holliday junction branch migration complex subunit RuvB (348 aa).

Residues 4-186 (TDRIISANTV…FGIIQRLEFY (183 aa)) form a large ATPase domain (RuvB-L) region. ATP contacts are provided by residues I25, R26, G67, K70, T71, T72, 133–135 (EDY), R176, Y186, and R223. T71 is a binding site for Mg(2+). A small ATPAse domain (RuvB-S) region spans residues 187–257 (SVDDLAKIVY…IADKALTMLK (71 aa)). The head domain (RuvB-H) stretch occupies residues 260 to 348 (PVGFDHMDHK…SSDQQQNLSL (89 aa)). Residues R315 and R320 each coordinate DNA.

This sequence belongs to the RuvB family. In terms of assembly, homohexamer. Forms an RuvA(8)-RuvB(12)-Holliday junction (HJ) complex. HJ DNA is sandwiched between 2 RuvA tetramers; dsDNA enters through RuvA and exits via RuvB. An RuvB hexamer assembles on each DNA strand where it exits the tetramer. Each RuvB hexamer is contacted by two RuvA subunits (via domain III) on 2 adjacent RuvB subunits; this complex drives branch migration. In the full resolvosome a probable DNA-RuvA(4)-RuvB(12)-RuvC(2) complex forms which resolves the HJ.

It localises to the cytoplasm. It catalyses the reaction ATP + H2O = ADP + phosphate + H(+). In terms of biological role, the RuvA-RuvB-RuvC complex processes Holliday junction (HJ) DNA during genetic recombination and DNA repair, while the RuvA-RuvB complex plays an important role in the rescue of blocked DNA replication forks via replication fork reversal (RFR). RuvA specifically binds to HJ cruciform DNA, conferring on it an open structure. The RuvB hexamer acts as an ATP-dependent pump, pulling dsDNA into and through the RuvAB complex. RuvB forms 2 homohexamers on either side of HJ DNA bound by 1 or 2 RuvA tetramers; 4 subunits per hexamer contact DNA at a time. Coordinated motions by a converter formed by DNA-disengaged RuvB subunits stimulates ATP hydrolysis and nucleotide exchange. Immobilization of the converter enables RuvB to convert the ATP-contained energy into a lever motion, pulling 2 nucleotides of DNA out of the RuvA tetramer per ATP hydrolyzed, thus driving DNA branch migration. The RuvB motors rotate together with the DNA substrate, which together with the progressing nucleotide cycle form the mechanistic basis for DNA recombination by continuous HJ branch migration. Branch migration allows RuvC to scan DNA until it finds its consensus sequence, where it cleaves and resolves cruciform DNA. The sequence is that of Holliday junction branch migration complex subunit RuvB from Francisella philomiragia subsp. philomiragia (strain ATCC 25017 / CCUG 19701 / FSC 153 / O#319-036).